A 400-amino-acid chain; its full sequence is MNFLLCIFKGVYVIKLIQRFFKLESAGGILLLFSAVVAMLLANSPLSNQYNDFLNLPVSLQIGSFSINKTLIHWINDGFMAVFFVLVGMEVKKELFEGALSTYQQAIFPAIAAIGGMVIPAVVYWFIAKQDPSLANGWAIPMATDIAFALGIMALLSKQVPLPLKIFLLALAIIDDLGAIVVIALFFSHGLSVQALIFSAVAIIALILLNRFKVSALCAYMVVGAILWASVLKSGVHATLAGVIIGFSIPLKGKKGERPLDDFEHILSSWSSFVILPLFAFANAGVSFAGIDVNMISSPLLLAIASGLIIGKPVGIFGFSYISVKLGLAKLPDGINFKQIFAVAVLCGIGFTMSMFLASLAFDANAGESVNTLSRLGILLGSTVSAILGYLFLKQTTKLS.

The next 12 helical transmembrane spans lie at 26–46 (AGGILLLFSAVVAMLLANSPL), 71–91 (LIHWINDGFMAVFFVLVGMEV), 107–127 (IFPAIAAIGGMVIPAVVYWFI), 137–157 (GWAIPMATDIAFALGIMALLS), 166–186 (IFLLALAIIDDLGAIVVIALF), 189–209 (HGLSVQALIFSAVAIIALILL), 212–232 (FKVSALCAYMVVGAILWASVL), 233–253 (KSGVHATLAGVIIGFSIPLKG), 273–293 (FVILPLFAFANAGVSFAGIDV), 299–319 (PLLLAIASGLIIGKPVGIFGF), 340–360 (IFAVAVLCGIGFTMSMFLASL), and 373–393 (LSRLGILLGSTVSAILGYLFL).

This sequence belongs to the NhaA Na(+)/H(+) (TC 2.A.33) antiporter family.

It is found in the cell inner membrane. The catalysed reaction is Na(+)(in) + 2 H(+)(out) = Na(+)(out) + 2 H(+)(in). Its function is as follows. Na(+)/H(+) antiporter that extrudes sodium in exchange for external protons. This Haemophilus influenzae (strain PittGG) protein is Na(+)/H(+) antiporter NhaA.